Consider the following 366-residue polypeptide: Protein FAM131A (366 aa).

Residues 342 to 366 (QRQASDLASSGVVSLDEDEAEPEEQ) form a disordered region. A compositionally biased stretch (acidic residues) spans 356 to 366 (LDEDEAEPEEQ).

The protein belongs to the FAM131 family.

The polypeptide is Protein FAM131A (FAM131A) (Homo sapiens (Human)).